Reading from the N-terminus, the 212-residue chain is Large ribosomal subunit protein uL1 (212 aa).

Belongs to the universal ribosomal protein uL1 family. In terms of assembly, part of the 50S ribosomal subunit.

In terms of biological role, binds directly to 23S rRNA. Probably involved in E site tRNA release. Its function is as follows. Protein L1 is also a translational repressor protein, it controls the translation of its operon by binding to its mRNA. This Natronomonas pharaonis (strain ATCC 35678 / DSM 2160 / CIP 103997 / JCM 8858 / NBRC 14720 / NCIMB 2260 / Gabara) (Halobacterium pharaonis) protein is Large ribosomal subunit protein uL1.